A 210-amino-acid polypeptide reads, in one-letter code: CASP-like protein 3A2 (210 aa).

Residues 1-45 (MMMNGQKMAAAEVAVQLPESKMVTENIGGAAAAMRPFGRKAEVMN) lie on the Cytoplasmic side of the membrane. A helical membrane pass occupies residues 46-66 (VLLRVLCMVTSVAALSSMVTA). The Extracellular segment spans residues 67–92 (QQSSTVSIYGFMLPIQSKWSFSHSFE). Residues 93–113 (YVVGVSAVVAAHSLLQLLISV) form a helical membrane-spanning segment. Residues 114 to 128 (SRLLRKSPVIQSRSH) lie on the Cytoplasmic side of the membrane. The chain crosses the membrane as a helical span at residues 129 to 149 (AWLVFAGDQVFAYAMISAGAA). At 150–178 (ASGVTNLNRTGIRHTALPNFCKPLQSFCD) the chain is on the extracellular side. N-linked (GlcNAc...) asparagine glycosylation occurs at N157. A helical membrane pass occupies residues 179–199 (HVAVSIFFTFLSCFLLAASAV). Topologically, residues 200-210 (QEVIWLSRSKY) are cytoplasmic.

It belongs to the Casparian strip membrane proteins (CASP) family. As to quaternary structure, homodimer and heterodimers.

It localises to the cell membrane. This Populus trichocarpa (Western balsam poplar) protein is CASP-like protein 3A2.